The following is a 707-amino-acid chain: Kinesin-like protein KIN-13B (707 aa).

The 326-residue stretch at 152-477 (KIKVVVRKRP…LRYADRVKSL (326 aa)) folds into the Kinesin motor domain. 243–250 (GQTGSGKT) is a binding site for ATP. Positions 619-656 (EHLNELLQEEEDLVSAHRKQVEETLDMIKEEMNLLVEA) form a coiled coil.

It belongs to the TRAFAC class myosin-kinesin ATPase superfamily. Kinesin family. KIN-13 subfamily.

This is Kinesin-like protein KIN-13B from Oryza sativa subsp. japonica (Rice).